The primary structure comprises 318 residues: Ethyl acetate hydrolase (318 aa).

Active-site residues include S165, D261, and H291.

The protein belongs to the 'GDXG' lipolytic enzyme family. In terms of assembly, monomer.

The protein localises to the cytoplasm. It catalyses the reaction ethyl acetate + H2O = ethanol + acetate + H(+). Inhibited by the serine protease inhibitor phenylmethylsulfonyl fluoride, the histidine reagent diethylpyrocarbonate and two sulfhydryl reagents, mercuric chloride and naphthol AS-D chloroacetate. Not inhibited by EDTA. Its function is as follows. Esterase that catalyzes the hydrolysis of ethyl acetate. Can also use propyl acetate and the chromogenic substrates alpha-naphthyl acetate, alpha-naphthyl propionate, alpha-naphthyl caproate and 4-nitrophenyl acetate, with a preference for short-chain aliphatic esters. Highest activity is obtained in vitro with propyl acetate, followed by ethyl acetate. In vivo, could be involved in pyoverdine biosynthesis, but its specific role and its in vivo substrate have not been identified. This chain is Ethyl acetate hydrolase, found in Pseudomonas putida (Arthrobacter siderocapsulatus).